A 332-amino-acid chain; its full sequence is MARILDNDVMGNEEFSDRTLRPQYLHEYIGQDKVKEQFAIFIEAAKRRDESLDHVLLFGPPGLGKTTMAFVIANELGVNLKQTSGPAVEKAGDLVAILNELEPGDILFIDEIHRMPMSVEEVLYSAMEDFYIDIMIGAGDTSRSIHLDLPPFTLIGATTRAGMLSNPLRARFGITGHMEYYQEKDLTEIVERTATIFEIKIDHEAARKLACRSRGTPRIANRLLKRVRDYAQIIGDGIITAQITDRALTMLDVDREGLDYIDQKILRTMIEMYQGGPVGLGTLSVNIAEERNTVEEMYEPYLIQKGFLMRTRTGRVATQKAYRHLGYPYQNT.

Residues 1 to 181 (MARILDNDVM…FGITGHMEYY (181 aa)) are large ATPase domain (RuvB-L). ATP is bound by residues Leu20, Arg21, Gly62, Lys65, Thr66, Thr67, 128–130 (EDF), Arg171, Tyr181, and Arg218. Thr66 lines the Mg(2+) pocket. A small ATPAse domain (RuvB-S) region spans residues 182-252 (QEKDLTEIVE…ITDRALTMLD (71 aa)). The interval 255 to 332 (REGLDYIDQK…RHLGYPYQNT (78 aa)) is head domain (RuvB-H). 4 residues coordinate DNA: Arg291, Arg310, Arg312, and Arg315.

This sequence belongs to the RuvB family. In terms of assembly, homohexamer. Forms an RuvA(8)-RuvB(12)-Holliday junction (HJ) complex. HJ DNA is sandwiched between 2 RuvA tetramers; dsDNA enters through RuvA and exits via RuvB. An RuvB hexamer assembles on each DNA strand where it exits the tetramer. Each RuvB hexamer is contacted by two RuvA subunits (via domain III) on 2 adjacent RuvB subunits; this complex drives branch migration. In the full resolvosome a probable DNA-RuvA(4)-RuvB(12)-RuvC(2) complex forms which resolves the HJ.

The protein localises to the cytoplasm. It carries out the reaction ATP + H2O = ADP + phosphate + H(+). Functionally, the RuvA-RuvB-RuvC complex processes Holliday junction (HJ) DNA during genetic recombination and DNA repair, while the RuvA-RuvB complex plays an important role in the rescue of blocked DNA replication forks via replication fork reversal (RFR). RuvA specifically binds to HJ cruciform DNA, conferring on it an open structure. The RuvB hexamer acts as an ATP-dependent pump, pulling dsDNA into and through the RuvAB complex. RuvB forms 2 homohexamers on either side of HJ DNA bound by 1 or 2 RuvA tetramers; 4 subunits per hexamer contact DNA at a time. Coordinated motions by a converter formed by DNA-disengaged RuvB subunits stimulates ATP hydrolysis and nucleotide exchange. Immobilization of the converter enables RuvB to convert the ATP-contained energy into a lever motion, pulling 2 nucleotides of DNA out of the RuvA tetramer per ATP hydrolyzed, thus driving DNA branch migration. The RuvB motors rotate together with the DNA substrate, which together with the progressing nucleotide cycle form the mechanistic basis for DNA recombination by continuous HJ branch migration. Branch migration allows RuvC to scan DNA until it finds its consensus sequence, where it cleaves and resolves cruciform DNA. The chain is Holliday junction branch migration complex subunit RuvB from Streptococcus pyogenes serotype M3 (strain ATCC BAA-595 / MGAS315).